The chain runs to 542 residues: Chaperonin GroEL (542 aa).

ATP-binding positions include Thr-29–Pro-32, Asp-86–Thr-90, Gly-413, Asn-476–Ala-478, and Asp-492.

The protein belongs to the chaperonin (HSP60) family. As to quaternary structure, forms a cylinder of 14 subunits composed of two heptameric rings stacked back-to-back. Interacts with the co-chaperonin GroES.

It is found in the cytoplasm. The enzyme catalyses ATP + H2O + a folded polypeptide = ADP + phosphate + an unfolded polypeptide.. Together with its co-chaperonin GroES, plays an essential role in assisting protein folding. The GroEL-GroES system forms a nano-cage that allows encapsulation of the non-native substrate proteins and provides a physical environment optimized to promote and accelerate protein folding. In Listeria welshimeri serovar 6b (strain ATCC 35897 / DSM 20650 / CCUG 15529 / CIP 8149 / NCTC 11857 / SLCC 5334 / V8), this protein is Chaperonin GroEL.